The primary structure comprises 96 residues: Large ribosomal subunit protein uL23 (96 aa).

It belongs to the universal ribosomal protein uL23 family. As to quaternary structure, part of the 50S ribosomal subunit. Contacts protein L29, and trigger factor when it is bound to the ribosome.

Its function is as follows. One of the early assembly proteins it binds 23S rRNA. One of the proteins that surrounds the polypeptide exit tunnel on the outside of the ribosome. Forms the main docking site for trigger factor binding to the ribosome. This chain is Large ribosomal subunit protein uL23, found in Alkaliphilus metalliredigens (strain QYMF).